The following is a 403-amino-acid chain: Phosphoglycerate kinase (403 aa).

Residues 21–23 (DFN), Arg36, 59–62 (HLGR), Arg119, and Arg159 each bind substrate. Residues Lys214, Gly301, Glu332, and 359–362 (GGDS) contribute to the ATP site.

This sequence belongs to the phosphoglycerate kinase family. In terms of assembly, monomer.

The protein resides in the cytoplasm. It carries out the reaction (2R)-3-phosphoglycerate + ATP = (2R)-3-phospho-glyceroyl phosphate + ADP. Its pathway is carbohydrate degradation; glycolysis; pyruvate from D-glyceraldehyde 3-phosphate: step 2/5. The protein is Phosphoglycerate kinase of Lactobacillus johnsonii (strain CNCM I-12250 / La1 / NCC 533).